Here is a 594-residue protein sequence, read N- to C-terminus: Capsid vertex component 1 (594 aa).

4 disordered regions span residues 52–77 (GRSTGRAPGGDEDDAPASDDAEDAVG), 176–205 (NKRDRQHQLATTTNHRRRGGLRNNLDNGSD), 443–468 (ARRQRERSAPKPQELLFGPRNESGPP), and 575–594 (GRQEPETPRVSGRRLPFDDL). Positions 61-76 (GDEDDAPASDDAEDAV) are enriched in acidic residues.

This sequence belongs to the herpesviridae CVC1 protein family. In terms of assembly, interacts (via C-terminus) with capsid vertex component 2/CVC2.

The protein resides in the virion. It localises to the host nucleus. In terms of biological role, capsid vertex-specific component that plays a role during viral DNA encapsidation, assuring correct genome cleavage and presumably stabilizing capsids that contain full-length viral genomes. The polypeptide is Capsid vertex component 1 (Homo sapiens (Human)).